Consider the following 419-residue polypeptide: Histidine--tRNA ligase (419 aa).

It belongs to the class-II aminoacyl-tRNA synthetase family. In terms of assembly, homodimer.

The protein localises to the cytoplasm. It catalyses the reaction tRNA(His) + L-histidine + ATP = L-histidyl-tRNA(His) + AMP + diphosphate + H(+). This is Histidine--tRNA ligase from Desulfatibacillum aliphaticivorans.